Reading from the N-terminus, the 117-residue chain is Photosystem II reaction center Psb28 protein (117 aa).

The protein belongs to the Psb28 family. As to quaternary structure, part of the photosystem II complex.

Its subcellular location is the cellular thylakoid membrane. In Prochlorococcus marinus (strain MIT 9312), this protein is Photosystem II reaction center Psb28 protein.